The primary structure comprises 466 residues: Ras-GEF domain-containing family member 1C (466 aa).

The disordered stretch occupies residues Met-1 to Ala-37. An N-terminal Ras-GEF domain is found at Leu-34–Ala-164. A Ras-GEF domain is found at Asp-200–Pro-446.

Functionally, guanine nucleotide exchange factor (GEF). This Homo sapiens (Human) protein is Ras-GEF domain-containing family member 1C (RASGEF1C).